The following is a 117-amino-acid chain: UPF0122 protein Dred_2057 (117 aa).

This sequence belongs to the UPF0122 family.

Functionally, might take part in the signal recognition particle (SRP) pathway. This is inferred from the conservation of its genetic proximity to ftsY/ffh. May be a regulatory protein. The protein is UPF0122 protein Dred_2057 of Desulforamulus reducens (strain ATCC BAA-1160 / DSM 100696 / MI-1) (Desulfotomaculum reducens).